The primary structure comprises 520 residues: MSLSLLIAGALFIGFLTYYIWIWSFWIRKGVKGPRGFPFFGVILKFHDYENPGLLKLGEWTKKYGSIYGITEGVEKTLVVSNPEFVHEVFVKQFDNFYGRKTNPIQGDPNKNKRAHLVLAQGHRWKRLRTLASPTFSNKSLRKIMSTVEETVVELMRHLDEASAKGKAVDLLDYYQEFTLDIIGRIAMGQTESLMFRNPMLPKVKEIFKKGGKMPFLIAGVFPIAGTLMRQLFMKFPKFSPAFGIMNTMEKALNKRLEQRAADKKAGIEPSGEPQDFIDLFLDARANVDFIEEESTLGFAKSEVLKVDKHLTFDEIIGQLFVFLLAGYDTTALSLSYSSYLLATHPEIQKKLQEEVDRECPDPEVTFDQISKLKYMECVVKEALRMYPLASLVHNRKCMKKTNVLGVEIDEGTNVQVDTWTLHYDPKVWGDDASEFKPERWETGDELFYAKGGYLPFGMGPRICIGMRLAMMEEKLLLTHILKKYTFDTSTETEIPLKLVGSATIAPRNVMLKLTPRHSN.

Cys-464 lines the heme pocket.

Belongs to the cytochrome P450 family. It depends on heme as a cofactor.

In terms of biological role, cytochromes P450 are a group of heme-thiolate monooxygenases. They oxidize a variety of structurally unrelated compounds, including steroids, fatty acids, and xenobiotics. This chain is Putative cytochrome P450 CYP13A4 (cyp-13A4), found in Caenorhabditis elegans.